The primary structure comprises 717 residues: Delta-like protein D (717 aa).

Positions 1–19 (MGRLMIAVLLCVMISQGFC) are cleaved as a signal peptide. At 20–547 (SGVFELKLQE…EEDDGGFPWT (528 aa)) the chain is on the extracellular side. In terms of domain architecture, DSL spans 175–219 (FVCDEHYYGEGCSVFCRPRDDTFGHFTCGERGEIICNSGWKGQYC). 26 disulfides stabilise this stretch: C177–C186, C190–C202, C210–C219, C224–C235, C228–C241, C243–C252, C261–C266, C274–C283, C290–C302, C296–C312, C314–C323, C330–C341, C335–C350, C352–C361, C368–C379, C373–C389, C391–C400, C407–C418, C412–C427, C429–C438, C445–C456, C450–C465, C467–C476, C483–C494, C488–C503, and C505–C514. EGF-like domains lie at 220–253 (TEPI…KYCD), 257–284 (RYPG…LFCN), and 286–324 (DLNY…DSCE). Residues 326-362 (EVNECSGSPCRNGGSCTDLENTYSCTCPPGFYGRNCE) enclose the EGF-like 4; calcium-binding domain. 2 consecutive EGF-like domains span residues 364-401 (SAMT…FNCE) and 403-439 (KIDH…THCE). Residues 441 to 477 (NIDECATYPCQNGGTCQDGLSDYTCTCPPGYTGKNCT) enclose the EGF-like 7; calcium-binding domain. An N-linked (GlcNAc...) asparagine glycan is attached at N475. The region spanning 479–515 (AVNKCLHNPCHNGATCHEMDNRYVCACIPGYGGRNCQ) is the EGF-like 8 domain. The chain crosses the membrane as a helical span at residues 548–568 (AVCAGIILVLLVLIGGSVFVI). At 569–717 (YIRLKLQQRS…KDECIIATEV (149 aa)) the chain is on the cytoplasmic side. Residues 649-693 (EDLGKEDSERSEATKCEPLDSDSEEKHRNHLKSDSSERKRTESLC) form a disordered region.

In terms of assembly, interacts with mib. Ubiquitinated by mib, leading to its endocytosis and subsequent degradation. As to expression, expressed in both mesodermal and neuroectodermal regions. In the developing nervous system, it is expressed in overlapping regions with deltaB (dlb) and deltaA (dla); in the neural plate, dld is expressed in patches of contiguous cells with dla, while dlb is confined to scattered cells within those patches that will differentiate as neurons. In somites, it marks the anterior part of each formed somite, while deltaC (dlc) marks the posterior part. In 24 hours embryos, expressed in the hindbrain in stripes adjacent to rhombomere boundaries, but not in the actual boundary cells.

It is found in the membrane. Functionally, acts as a ligand for Notch receptors and is involved in primary neurogenesis and somitogenesis. Can activate Notch receptors, thereby playing a key role in lateral inhibition, a process that prevents the immediate neighbors of each nascent neural cell from simultaneously embarking on neural differentiation. Required in somite segmentation to keep the oscillations of neighboring presomitic mesoderm cells synchronized. The protein is Delta-like protein D (dld) of Danio rerio (Zebrafish).